The following is an 86-amino-acid chain: Small ribosomal subunit protein bS20 (86 aa).

It belongs to the bacterial ribosomal protein bS20 family.

Binds directly to 16S ribosomal RNA. The chain is Small ribosomal subunit protein bS20 from Buchnera aphidicola subsp. Cinara cedri (strain Cc).